A 489-amino-acid chain; its full sequence is L-arabinose isomerase (489 aa).

Residues E300, E325, H342, and H441 each contribute to the Mn(2+) site.

It belongs to the arabinose isomerase family. The cofactor is Mn(2+).

It carries out the reaction beta-L-arabinopyranose = L-ribulose. The protein operates within carbohydrate degradation; L-arabinose degradation via L-ribulose; D-xylulose 5-phosphate from L-arabinose (bacterial route): step 1/3. Functionally, catalyzes the conversion of L-arabinose to L-ribulose. The chain is L-arabinose isomerase from Clostridium beijerinckii (strain ATCC 51743 / NCIMB 8052) (Clostridium acetobutylicum).